The chain runs to 169 residues: Neurotensin/neuromedin N (169 aa).

Residues 1–22 form the signal peptide; sequence MRGMNLQLVCLTLLAFSSWSLC.

The protein belongs to the neurotensin family. In terms of assembly, interacts with NTSR1. Interacts with SORT1. Interacts with SORL1. Post-translationally, neurotensin is cleaved and degraded by Angiotensin-converting enzyme (ACE) and neprilysin (MME).

The protein localises to the secreted. The protein resides in the cytoplasmic vesicle. It localises to the secretory vesicle. Functionally, neurotensin may play an endocrine or paracrine role in the regulation of fat metabolism. It causes contraction of smooth muscle. This chain is Neurotensin/neuromedin N (Nts), found in Mus musculus (Mouse).